A 377-amino-acid chain; its full sequence is Succinyl-diaminopimelate desuccinylase (377 aa).

Histidine 68 provides a ligand contact to Zn(2+). Aspartate 70 is an active-site residue. Residue aspartate 101 participates in Zn(2+) binding. The Proton acceptor role is filled by glutamate 135. Residues glutamate 136, glutamate 164, and histidine 350 each coordinate Zn(2+).

The protein belongs to the peptidase M20A family. DapE subfamily. In terms of assembly, homodimer. Zn(2+) serves as cofactor. The cofactor is Co(2+).

The catalysed reaction is N-succinyl-(2S,6S)-2,6-diaminopimelate + H2O = (2S,6S)-2,6-diaminopimelate + succinate. Its pathway is amino-acid biosynthesis; L-lysine biosynthesis via DAP pathway; LL-2,6-diaminopimelate from (S)-tetrahydrodipicolinate (succinylase route): step 3/3. Its function is as follows. Catalyzes the hydrolysis of N-succinyl-L,L-diaminopimelic acid (SDAP), forming succinate and LL-2,6-diaminopimelate (DAP), an intermediate involved in the bacterial biosynthesis of lysine and meso-diaminopimelic acid, an essential component of bacterial cell walls. The protein is Succinyl-diaminopimelate desuccinylase of Acinetobacter baylyi (strain ATCC 33305 / BD413 / ADP1).